Here is a 160-residue protein sequence, read N- to C-terminus: Early E3 18.5 kDa glycoprotein (160 aa).

The first 17 residues, 1 to 17 (MIRYIILGLLTLASAHG), serve as a signal peptide directing secretion. Residues 18-124 (TTQKVDFKEP…PPQNCVENTG (107 aa)) lie on the Lumenal side of the membrane. Cystine bridges form between cysteine 29/cysteine 46 and cysteine 40/cysteine 101. Residues asparagine 30 and asparagine 79 are each glycosylated (N-linked (GlcNAc...) asparagine; by host). The helical transmembrane segment at 125–145 (TFCCTAMLITVLALVCTLLYI) threads the bilayer. The Cytoplasmic portion of the chain corresponds to 146 to 160 (KYKSRRSFIEEKKMP). A Di-lysine motif motif is present at residues 157-160 (KKMP).

It belongs to the adenoviridae E19 family. Both disulfide bonds are absolutely critical for the interaction with MHC antigens. Post-translationally, N-glycosylated; high-mannose.

It localises to the host endoplasmic reticulum membrane. In terms of biological role, binds and retains class I heavy chains in the endoplasmic reticulum during the early period of virus infection, thereby impairing their transport to the cell surface. Also delays the expression of class I alleles that it cannot affect by direct retention. Binds transporters associated with antigen processing (TAP) and acts as a tapasin inhibitor, preventing class I/TAP association. In consequence, infected cells are masked for immune recognition by cytotoxic T-lymphocytes. The polypeptide is Early E3 18.5 kDa glycoprotein (Homo sapiens (Human)).